Here is a 383-residue protein sequence, read N- to C-terminus: BRISC and BRCA1-A complex member 2 (383 aa).

Methionine 1 is modified (N-acetylmethionine). Serine 2 bears the Phosphoserine mark. UEV-like stretches follow at residues 30–147 (DATN…TLLE) and 275–364 (IAAF…RAKA).

The protein belongs to the BABAM2 family. In terms of assembly, component of the ARISC complex, at least composed of UIMC1/RAP80, ABRAXAS1, BRCC3/BRCC36, BABAM2 and BABAM1/NBA1. Component of the BRCA1-A complex, at least composed of BRCA1, BARD1, UIMC1/RAP80, ABRAXAS1, BRCC3/BRCC36, BABAM2 and BABAM1/NBA1. In the BRCA1-A complex, interacts directly with ABRAXAS1, BRCC3/BRCC36 and BABAM1/NBA1. Binds polyubiquitin. Component of the BRISC complex, at least composed of ABRAXAS2, BRCC3/BRCC36, BABAM2 and BABAM1/NBA1. Identified in a complex with SHMT2 and the other subunits of the BRISC complex. Component of the BRCA1/BRCA2 containing complex (BRCC), which also contains BRCA1, BRCA2, BARD1, BRCC3/BRCC36 and RAD51. BRCC is a ubiquitin E3 ligase complex that enhances cellular survival following DNA damage. May interact with FAS and TNFRSF1A.

Its subcellular location is the cytoplasm. The protein localises to the nucleus. Functionally, component of the BRCA1-A complex, a complex that specifically recognizes 'Lys-63'-linked ubiquitinated histones H2A and H2AX at DNA lesions sites, leading to target the BRCA1-BARD1 heterodimer to sites of DNA damage at double-strand breaks (DSBs). The BRCA1-A complex also possesses deubiquitinase activity that specifically removes 'Lys-63'-linked ubiquitin on histones H2A and H2AX. In the BRCA1-A complex, it acts as an adapter that bridges the interaction between BABAM1/NBA1 and the rest of the complex, thereby being required for the complex integrity and modulating the E3 ubiquitin ligase activity of the BRCA1-BARD1 heterodimer. Component of the BRISC complex, a multiprotein complex that specifically cleaves 'Lys-63'-linked ubiquitin in various substrates. Within the BRISC complex, acts as an adapter that bridges the interaction between BABAM1/NBA1 and the rest of the complex, thereby being required for the complex integrity. The BRISC complex is required for normal mitotic spindle assembly and microtubule attachment to kinetochores via its role in deubiquitinating NUMA1. The BRISC complex plays a role in interferon signaling via its role in the deubiquitination of the interferon receptor IFNAR1; deubiquitination increases IFNAR1 activity by enhancing its stability and cell surface expression. Down-regulates the response to bacterial lipopolysaccharide (LPS) via its role in IFNAR1 deubiquitination. May play a role in homeostasis or cellular differentiation in cells of neural, epithelial and germline origins. May also act as a death receptor-associated anti-apoptotic protein, which inhibits the mitochondrial apoptotic pathway. May regulate TNF-alpha signaling through its interactions with TNFRSF1A; however these effects may be indirect. The protein is BRISC and BRCA1-A complex member 2 (BABAM2) of Bos taurus (Bovine).